The sequence spans 374 residues: Nucleosome assembly protein 1;1 (374 aa).

Residues valine 26–glutamate 80 adopt a coiled-coil conformation. Residues leucine 47 to glutamine 62 carry the Nuclear export signal motif. A Nuclear localization signal motif is present at residues lysine 223 to lysine 228. Positions alanine 299–aspartate 339 are enriched in acidic residues. The disordered stretch occupies residues alanine 299–glutamine 374. Basic residues predominate over residues lysine 343 to arginine 355. Cysteine 371 is subject to Cysteine methyl ester. Cysteine 371 carries S-farnesyl cysteine lipidation. A propeptide spans lysine 372–glutamine 374 (removed in mature form).

It belongs to the nucleosome assembly protein (NAP) family. Binds preferentially histones H4 and H1 in vitro. Interacts with CYCB1;1.

It is found in the nucleus. Its subcellular location is the cytoplasm. In terms of biological role, may modulate chromatin structure by regulation of nucleosome assembly/disassembly. Could function together with B-type cyclins in the regulation of microtubule dynamics. This chain is Nucleosome assembly protein 1;1 (NAP1;1), found in Nicotiana tabacum (Common tobacco).